The sequence spans 718 residues: Glycine--tRNA ligase beta subunit (718 aa).

Belongs to the class-II aminoacyl-tRNA synthetase family. In terms of assembly, tetramer of two alpha and two beta subunits.

It is found in the cytoplasm. The catalysed reaction is tRNA(Gly) + glycine + ATP = glycyl-tRNA(Gly) + AMP + diphosphate. The sequence is that of Glycine--tRNA ligase beta subunit from Mesorhizobium japonicum (strain LMG 29417 / CECT 9101 / MAFF 303099) (Mesorhizobium loti (strain MAFF 303099)).